Here is a 436-residue protein sequence, read N- to C-terminus: uncharacterized protein (436 aa).

This is an uncharacterized protein from Haemophilus influenzae (strain ATCC 51907 / DSM 11121 / KW20 / Rd).